The sequence spans 157 residues: AM-toxin biosynthesis protein 15 (157 aa).

A disordered region spans residues 17–43 (RARHWDSKQGSSNSDVASGGSEVAGNS).

It functions in the pathway mycotoxin biosynthesis. Part of the gene clusters that mediate the biosynthesis of AM-toxins, host-selective toxins (HSTs) causing Alternaria blotch on apple, a worldwide distributed disease. AM-toxins are cyclic depsipeptides containing the 3 residues 2-hydroxy-isovaleric acid (2-HIV), dehydroalanine, L-alanine which are common for all 3 AM-toxins I to III. The fourth precursor is L-alpha-amino-methoxyphenyl-valeric acid (L-Amv) for AM-toxin I, L-alpha-amino-phenyl-valeric acid (L-Apv) for AM-toxin II, and L-alpha-amino-hydroxyphenyl-valeric acid (L-Ahv) for AM-toxin III. AM-toxins have two target sites for affecting susceptible apple cells; they cause invagination of the plasma membrane and electrolyte loss and chloroplast disorganization. The non-ribosomal peptide synthetase AMT1 contains 4 catalytic modules and is responsible for activation of each residue in AM-toxin. The aldo-keto reductase AMT2 catalyzes the conversion of 2-keto-isovaleric acid (2-KIV) to 2-hydroxy-isovaleric acid (2-HIV), one of the precursor residues incorporated by AMT1 during AM-toxin biosynthesis, by reduction of its ketone to an alcohol. The cytochrome P450 monooxygenase AMT3 and the thioesterase AMT4 are also important for AM-toxin production, but their exact function within the AM-toxin biosynthesis are not known yet. Up to 21 proteins (including AMT1 to AMT4) are predicted to be involved in AM-toxin biosynthesis since their expression ishighly up-regulated in AM-toxin-producing cultures. This Alternaria alternata (Alternaria rot fungus) protein is AM-toxin biosynthesis protein 15.